Consider the following 466-residue polypeptide: Uronate isomerase (466 aa).

Belongs to the metallo-dependent hydrolases superfamily. Uronate isomerase family.

It catalyses the reaction D-glucuronate = D-fructuronate. The enzyme catalyses aldehydo-D-galacturonate = keto-D-tagaturonate. The protein operates within carbohydrate metabolism; pentose and glucuronate interconversion. The polypeptide is Uronate isomerase (Caldanaerobacter subterraneus subsp. tengcongensis (strain DSM 15242 / JCM 11007 / NBRC 100824 / MB4) (Thermoanaerobacter tengcongensis)).